The sequence spans 486 residues: Adenylate kinase 8 (486 aa).

2 adenylate kinase regions span residues 58–258 and 269–471; these read PRII…NFIC and PRIL…SRLV. ATP is bound at residue 67–72; that stretch reads ASGKKT. The NMP 1 stretch occupies residues 87–112; it reads TFCDILKDDSDLTRAAQSYYDKKQNV. AMP is bound by residues 139–142 and arginine 202; that span reads AIPK. Positions 176 to 205 are LID 1; the sequence is GKRIDPVTGDVYHVTFMWPESEEVAQRLET. 278–283 contributes to the ATP binding site; sequence GAGRNL. Residues 298-327 form an NMP 2 region; it reads CCGELLKAVSADESHMGELIKPYLESEQQV. AMP contacts are provided by residues 325-327 and 354-357; these read QQV and GFPR. The LID 2 stretch occupies residues 391 to 424; sequence LRAVDPVTGEWYHSVYKPPPGPEVQARLRFNPQH. Arginine 392 is a binding site for ATP. Residue arginine 432 coordinates AMP.

It belongs to the adenylate kinase family.

The protein resides in the cytoplasm. It localises to the cytosol. It carries out the reaction AMP + ATP = 2 ADP. It catalyses the reaction a 2'-deoxyribonucleoside 5'-diphosphate + ATP = a 2'-deoxyribonucleoside 5'-triphosphate + ADP. The catalysed reaction is a ribonucleoside 5'-diphosphate + ATP = a ribonucleoside 5'-triphosphate + ADP. Functionally, nucleoside monophosphate (NMP) kinase that catalyzes the reversible transfer of the terminal phosphate group between nucleoside triphosphates and monophosphates. Has highest activity toward AMP, and weaker activity toward dAMP, CMP and dCMP. Also displays broad nucleoside diphosphate kinase activity. The chain is Adenylate kinase 8 (ak8) from Danio rerio (Zebrafish).